The sequence spans 75 residues: Conotoxin VnMSGL-0111 (75 aa).

The first 20 residues, 1 to 20 (MSGLEIMVLTLLLLVSMATS), serve as a signal peptide directing secretion. A propeptide spanning residues 21–44 (HQDGGEKQATQRDAINVRRRSITR) is cleaved from the precursor. Disulfide bonds link Cys-48-Cys-60, Cys-52-Cys-69, and Cys-59-Cys-73.

It belongs to the conotoxin O3 superfamily. In terms of tissue distribution, expressed by the venom duct.

The protein localises to the secreted. This chain is Conotoxin VnMSGL-0111, found in Conus ventricosus (Mediterranean cone).